The chain runs to 506 residues: (+)-vincadifformine 19-hydroxylase (506 aa).

At 1–4 the chain is on the lumenal side; that stretch reads MELD. Residues 5 to 25 form a helical membrane-spanning segment; the sequence is ECSPSIFIISFIFIAISIAIL. Residues 26–506 are Cytoplasmic-facing; that stretch reads RRIRPKKTKA…DLHLIPTSYM (481 aa). Cys450 provides a ligand contact to heme.

Belongs to the cytochrome P450 family. The cofactor is heme. Accumulates progressively in roots.

Its subcellular location is the endoplasmic reticulum membrane. It catalyses the reaction (+)-vincadifformine + reduced [NADPH--hemoprotein reductase] + O2 = (+)-minovincinine + oxidized [NADPH--hemoprotein reductase] + H2O + H(+). The protein operates within alkaloid biosynthesis. The enantiomer (-)-vincadifformine acts as a competitive inhibitor. Its function is as follows. Component of the monoterpenoid indole alkaloids (MIAs, e.g. echitovenine, tabersonine, lochnericine, 19-hydroxytabersonine and horhammericine) biosynthetic pathway; MIAs are used in cancer treatment and other medical applications. Cytochrome P450 catalyzing the hydroxylation of (+)-vincadifformine to (+)-minovincinine. The chain is (+)-vincadifformine 19-hydroxylase from Catharanthus roseus (Madagascar periwinkle).